Consider the following 247-residue polypeptide: Uridylate kinase (247 aa).

Position 17 to 20 (lysine 17 to glycine 20) interacts with ATP. Glycine 59 lines the UMP pocket. ATP contacts are provided by glycine 60 and arginine 64. Residues aspartate 79 and threonine 140 to threonine 147 each bind UMP. Threonine 167, tyrosine 173, and aspartate 176 together coordinate ATP.

Belongs to the UMP kinase family. As to quaternary structure, homohexamer.

It is found in the cytoplasm. The enzyme catalyses UMP + ATP = UDP + ADP. It functions in the pathway pyrimidine metabolism; CTP biosynthesis via de novo pathway; UDP from UMP (UMPK route): step 1/1. With respect to regulation, inhibited by UTP. Its function is as follows. Catalyzes the reversible phosphorylation of UMP to UDP. In Legionella pneumophila (strain Paris), this protein is Uridylate kinase.